An 88-amino-acid polypeptide reads, in one-letter code: Defensin-like protein 24 (88 aa).

The first 23 residues, 1–23 (MASSKFVLFAILALSLLLSGTEA), serve as a signal peptide directing secretion. 4 cysteine pairs are disulfide-bonded: cysteine 37/cysteine 87, cysteine 47/cysteine 72, cysteine 56/cysteine 83, and cysteine 60/cysteine 85.

This sequence belongs to the DEFL family.

It localises to the secreted. The chain is Defensin-like protein 24 from Arabidopsis thaliana (Mouse-ear cress).